A 240-amino-acid chain; its full sequence is 1-(5-phosphoribosyl)-5-[(5-phosphoribosylamino)methylideneamino] imidazole-4-carboxamide isomerase (240 aa).

The active-site Proton acceptor is the Asp8. Catalysis depends on Asp129, which acts as the Proton donor.

It belongs to the HisA/HisF family.

It is found in the cytoplasm. It catalyses the reaction 1-(5-phospho-beta-D-ribosyl)-5-[(5-phospho-beta-D-ribosylamino)methylideneamino]imidazole-4-carboxamide = 5-[(5-phospho-1-deoxy-D-ribulos-1-ylimino)methylamino]-1-(5-phospho-beta-D-ribosyl)imidazole-4-carboxamide. It functions in the pathway amino-acid biosynthesis; L-histidine biosynthesis; L-histidine from 5-phospho-alpha-D-ribose 1-diphosphate: step 4/9. This Dinoroseobacter shibae (strain DSM 16493 / NCIMB 14021 / DFL 12) protein is 1-(5-phosphoribosyl)-5-[(5-phosphoribosylamino)methylideneamino] imidazole-4-carboxamide isomerase.